A 231-amino-acid chain; its full sequence is Phosphatidylserine decarboxylase proenzyme (231 aa).

The Schiff-base intermediate with substrate; via pyruvic acid role is filled by Ser188. Ser188 bears the Pyruvic acid (Ser); by autocatalysis mark.

It belongs to the phosphatidylserine decarboxylase family. PSD-A subfamily. As to quaternary structure, heterodimer of a large membrane-associated beta subunit and a small pyruvoyl-containing alpha subunit. The cofactor is pyruvate. Is synthesized initially as an inactive proenzyme. Formation of the active enzyme involves a self-maturation process in which the active site pyruvoyl group is generated from an internal serine residue via an autocatalytic post-translational modification. Two non-identical subunits are generated from the proenzyme in this reaction, and the pyruvate is formed at the N-terminus of the alpha chain, which is derived from the carboxyl end of the proenzyme. The post-translation cleavage follows an unusual pathway, termed non-hydrolytic serinolysis, in which the side chain hydroxyl group of the serine supplies its oxygen atom to form the C-terminus of the beta chain, while the remainder of the serine residue undergoes an oxidative deamination to produce ammonia and the pyruvoyl prosthetic group on the alpha chain.

It is found in the cell membrane. It carries out the reaction a 1,2-diacyl-sn-glycero-3-phospho-L-serine + H(+) = a 1,2-diacyl-sn-glycero-3-phosphoethanolamine + CO2. It participates in phospholipid metabolism; phosphatidylethanolamine biosynthesis; phosphatidylethanolamine from CDP-diacylglycerol: step 2/2. In terms of biological role, catalyzes the formation of phosphatidylethanolamine (PtdEtn) from phosphatidylserine (PtdSer). This chain is Phosphatidylserine decarboxylase proenzyme, found in Rickettsia rickettsii (strain Iowa).